The following is a 255-amino-acid chain: MTALYWQTIGEGERDLVLLHGWGLNAEVWSCIQALTPHFRLHLVDLPGYGRSQGFGALSLAQMTEIVLAAAPPQAWWLGWSLGGLVASQAALMQPQRVSGLITVASSPCFAARDEWPGIRPDVLSGFQHQLSLDFQRTVERFLALQTLGTESARQDARQLKAVVLNQPTPSVEVLNGGLEILRTADLRAPLAELNLPLLRIYGYLDGLVPRKVAELLDAAWPNSTSQIVAKAAHAPFISHPDEFVTMIEAFIAAH.

The AB hydrolase-1 domain occupies 16 to 241; that stretch reads LVLLHGWGLN…AAHAPFISHP (226 aa). Substrate-binding positions include Trp-22, 81 to 82, and 142 to 146; these read SL and FLALQ. The active-site Nucleophile is Ser-81. Catalysis depends on residues Asp-206 and His-234. His-234 is a binding site for substrate.

This sequence belongs to the AB hydrolase superfamily. Carboxylesterase BioH family. As to quaternary structure, monomer.

The protein localises to the cytoplasm. The catalysed reaction is 6-carboxyhexanoyl-[ACP] methyl ester + H2O = 6-carboxyhexanoyl-[ACP] + methanol + H(+). Its pathway is cofactor biosynthesis; biotin biosynthesis. Its function is as follows. The physiological role of BioH is to remove the methyl group introduced by BioC when the pimeloyl moiety is complete. It allows to synthesize pimeloyl-ACP via the fatty acid synthetic pathway through the hydrolysis of the ester bonds of pimeloyl-ACP esters. Also displays a weak thioesterase activity. Can form a complex with CoA, and may be involved in the condensation of CoA and pimelic acid into pimeloyl-CoA, a precursor in biotin biosynthesis. This Serratia marcescens protein is Pimeloyl-[acyl-carrier protein] methyl ester esterase.